We begin with the raw amino-acid sequence, 168 residues long: Transcriptional regulator MraZ (168 aa).

2 consecutive SpoVT-AbrB domains span residues 8-51 (EYNQ…GGDR) and 90-140 (ALNM…KADT).

It belongs to the MraZ family. As to quaternary structure, forms oligomers.

The protein localises to the cytoplasm. Its subcellular location is the nucleoid. In Cereibacter sphaeroides (strain ATCC 17029 / ATH 2.4.9) (Rhodobacter sphaeroides), this protein is Transcriptional regulator MraZ.